The chain runs to 71 residues: MRKSFYTWLMTERNPKSNSPKAILADLAFEESAFPKHTDDFDEVSRFLEEHASFSFNLGDFDSIWQEYLEH.

It belongs to the UPF0346 family.

The protein is UPF0346 protein SPG_0874 of Streptococcus pneumoniae serotype 19F (strain G54).